A 584-amino-acid polypeptide reads, in one-letter code: 2-succinyl-5-enolpyruvyl-6-hydroxy-3-cyclohexene-1-carboxylate synthase (584 aa).

The protein belongs to the TPP enzyme family. MenD subfamily. Homodimer. The cofactor is Mg(2+). It depends on Mn(2+) as a cofactor. Requires thiamine diphosphate as cofactor.

It catalyses the reaction isochorismate + 2-oxoglutarate + H(+) = 5-enolpyruvoyl-6-hydroxy-2-succinyl-cyclohex-3-ene-1-carboxylate + CO2. Its pathway is quinol/quinone metabolism; 1,4-dihydroxy-2-naphthoate biosynthesis; 1,4-dihydroxy-2-naphthoate from chorismate: step 2/7. It functions in the pathway quinol/quinone metabolism; menaquinone biosynthesis. Functionally, catalyzes the thiamine diphosphate-dependent decarboxylation of 2-oxoglutarate and the subsequent addition of the resulting succinic semialdehyde-thiamine pyrophosphate anion to isochorismate to yield 2-succinyl-5-enolpyruvyl-6-hydroxy-3-cyclohexene-1-carboxylate (SEPHCHC). In Bacillus cytotoxicus (strain DSM 22905 / CIP 110041 / 391-98 / NVH 391-98), this protein is 2-succinyl-5-enolpyruvyl-6-hydroxy-3-cyclohexene-1-carboxylate synthase.